We begin with the raw amino-acid sequence, 328 residues long: Carbonic anhydrase, chloroplastic (328 aa).

A compositionally biased stretch (low complexity) spans 1-15 (MSTSSINGFSLSSLS). Positions 1–26 (MSTSSINGFSLSSLSPAKTSTKRTTL) are disordered. The transit peptide at 1–70 (MSTSSINGFS…IITPVLREEM (70 aa)) directs the protein to the chloroplast.

It belongs to the beta-class carbonic anhydrase family. Homohexamer.

It localises to the plastid. The protein localises to the chloroplast stroma. The catalysed reaction is hydrogencarbonate + H(+) = CO2 + H2O. Reversible hydration of carbon dioxide. This chain is Carbonic anhydrase, chloroplastic, found in Pisum sativum (Garden pea).